The sequence spans 310 residues: Nuclear hormone receptor family member nhr-89 (310 aa).

A DNA-binding region (nuclear receptor) is located at residues 5 to 79 (EGPCRVCHSV…SGMRRDCVRK (75 aa)). NR C4-type zinc fingers lie at residues 8–29 (CRVC…CMSC) and 43–67 (CPAN…YNKC). Positions 101 to 310 (KLSESYEELL…TLHQKYQIPF (210 aa)) constitute an NR LBD domain.

This sequence belongs to the nuclear hormone receptor family.

The protein resides in the nucleus. Functionally, orphan nuclear receptor. The sequence is that of Nuclear hormone receptor family member nhr-89 (nhr-89) from Caenorhabditis elegans.